A 29-amino-acid chain; its full sequence is Protamine-like protein (29 aa).

The interval 1-29 (MRSFDQGSTRAPARERCRRQRPEGRSAQR) is disordered. Residues 12–29 (PARERCRRQRPEGRSAQR) show a composition bias toward basic and acidic residues.

The sequence is that of Protamine-like protein (tpr) from Escherichia coli (strain K12).